Consider the following 279-residue polypeptide: Bifunctional protein FolD 1 (279 aa).

NADP(+)-binding positions include 166-168 (GRS) and Ser191.

Belongs to the tetrahydrofolate dehydrogenase/cyclohydrolase family. As to quaternary structure, homodimer.

The enzyme catalyses (6R)-5,10-methylene-5,6,7,8-tetrahydrofolate + NADP(+) = (6R)-5,10-methenyltetrahydrofolate + NADPH. It catalyses the reaction (6R)-5,10-methenyltetrahydrofolate + H2O = (6R)-10-formyltetrahydrofolate + H(+). It functions in the pathway one-carbon metabolism; tetrahydrofolate interconversion. Catalyzes the oxidation of 5,10-methylenetetrahydrofolate to 5,10-methenyltetrahydrofolate and then the hydrolysis of 5,10-methenyltetrahydrofolate to 10-formyltetrahydrofolate. The polypeptide is Bifunctional protein FolD 1 (Salinispora arenicola (strain CNS-205)).